Consider the following 635-residue polypeptide: Threonine--tRNA ligase (635 aa).

The segment at 1 to 152 is editing domain; that stretch reads MQLLLIHSDY…AKAAVKPEAA (152 aa). The interval 215 to 514 is catalytic; the sequence is PHVELMRRLE…TEEGKVPMLP (300 aa). Residues C307, H359, and H483 each coordinate Zn(2+).

Belongs to the class-II aminoacyl-tRNA synthetase family. As to quaternary structure, homodimer. The cofactor is Zn(2+).

The protein localises to the cytoplasm. It catalyses the reaction tRNA(Thr) + L-threonine + ATP = L-threonyl-tRNA(Thr) + AMP + diphosphate + H(+). Functionally, catalyzes the attachment of threonine to tRNA(Thr) in a two-step reaction: L-threonine is first activated by ATP to form Thr-AMP and then transferred to the acceptor end of tRNA(Thr). Also edits incorrectly charged L-seryl-tRNA(Thr). The protein is Threonine--tRNA ligase of Methanosarcina acetivorans (strain ATCC 35395 / DSM 2834 / JCM 12185 / C2A).